A 110-amino-acid chain; its full sequence is Large ribosomal subunit protein uL22 (110 aa).

It belongs to the universal ribosomal protein uL22 family. In terms of assembly, part of the 50S ribosomal subunit.

In terms of biological role, this protein binds specifically to 23S rRNA; its binding is stimulated by other ribosomal proteins, e.g. L4, L17, and L20. It is important during the early stages of 50S assembly. It makes multiple contacts with different domains of the 23S rRNA in the assembled 50S subunit and ribosome. The globular domain of the protein is located near the polypeptide exit tunnel on the outside of the subunit, while an extended beta-hairpin is found that lines the wall of the exit tunnel in the center of the 70S ribosome. This is Large ribosomal subunit protein uL22 from Oleidesulfovibrio alaskensis (strain ATCC BAA-1058 / DSM 17464 / G20) (Desulfovibrio alaskensis).